We begin with the raw amino-acid sequence, 162 residues long: Large ribosomal subunit protein uL15 (162 aa).

The segment covering 1 to 10 (MNLNELRDNA) has biased composition (basic and acidic residues). The disordered stretch occupies residues 1–39 (MNLNELRDNAGSRYRKKRLGRGIGSGKGKTSGKGVKGQK). Over residues 21–35 (RGIGSGKGKTSGKGV) the composition is skewed to gly residues.

The protein belongs to the universal ribosomal protein uL15 family. In terms of assembly, part of the 50S ribosomal subunit.

Its function is as follows. Binds to the 23S rRNA. The protein is Large ribosomal subunit protein uL15 of Gluconacetobacter diazotrophicus (strain ATCC 49037 / DSM 5601 / CCUG 37298 / CIP 103539 / LMG 7603 / PAl5).